The chain runs to 101 residues: Small ubiquitin-related modifier 1 (101 aa).

Residues 20-97 enclose the Ubiquitin-like domain; the sequence is EYIKLKVIGQ…IEVYQEQTGG (78 aa). A Glycyl lysine isopeptide (Gly-Lys) (interchain with K-? in acceptor proteins) cross-link involves residue Gly97. Positions 98–101 are excised as a propeptide; the sequence is HSTV.

It belongs to the ubiquitin family. SUMO subfamily. Interacts with SAE2, UBE2I, RANBP2, PIAS1 and PIAS2. Covalently attached to a number of proteins. Cleavage of precursor form by a sentrin-specific protease is necessary for function.

It localises to the nucleus membrane. Its subcellular location is the nucleus speckle. It is found in the cytoplasm. The protein localises to the nucleus. The protein resides in the PML body. It localises to the cell membrane. Its function is as follows. Ubiquitin-like protein that can be covalently attached to proteins as a monomer or a lysine-linked polymer. Covalent attachment via an isopeptide bond to its substrates requires prior activation by the E1 complex SAE1-SAE2 and linkage to the E2 enzyme UBE2I. This post-translational modification on lysine residues of proteins plays a crucial role in a number of cellular processes such as nuclear transport, DNA replication and repair, mitosis and signal transduction. Polymeric SUMO1 chains are also susceptible to polyubiquitination which functions as a signal for proteasomal degradation of modified proteins. This is Small ubiquitin-related modifier 1 (SUMO1) from Gallus gallus (Chicken).